Here is a 189-residue protein sequence, read N- to C-terminus: GTPase HRas (189 aa).

Met-1 bears the N-acetylmethionine mark. Thr-2 bears the N-acetylthreonine; in GTPase HRas, N-terminally processed mark. 10 to 17 (GAGGVGKS) contributes to the GTP binding site. An Effector region motif is present at residues 32-40 (YDPTIEDSY). Residues 57-61 (DTAGQ) and 116-119 (NKCD) contribute to the GTP site. At Cys-118 the chain carries S-nitrosocysteine. The interval 166-185 (HKLRKLNPPDESGPGCMNCK) is hypervariable region. 2 S-palmitoyl cysteine lipidation sites follow: Cys-181 and Cys-184. Position 186 is a cysteine methyl ester (Cys-186). Cys-186 carries S-farnesyl cysteine lipidation. The propeptide at 187-189 (VIS) is removed in mature form.

The protein belongs to the small GTPase superfamily. Ras family. Post-translationally, palmitoylated by the ZDHHC9-GOLGA7 complex. A continuous cycle of de- and re-palmitoylation regulates rapid exchange between plasma membrane and Golgi.

Its subcellular location is the cell membrane. The protein localises to the golgi apparatus membrane. The catalysed reaction is GTP + H2O = GDP + phosphate + H(+). Its activity is regulated as follows. Alternates between an inactive form bound to GDP and an active form bound to GTP. Activated by a guanine nucleotide-exchange factor (GEF) and inactivated by a GTPase-activating protein (GAP). Functionally, ras proteins bind GDP/GTP and possess intrinsic GTPase activity. The polypeptide is GTPase HRas (HRAS) (Gallus gallus (Chicken)).